Reading from the N-terminus, the 389-residue chain is Lipid-A-disaccharide synthase (389 aa).

This sequence belongs to the LpxB family.

The enzyme catalyses a lipid X + a UDP-2-N,3-O-bis[(3R)-3-hydroxyacyl]-alpha-D-glucosamine = a lipid A disaccharide + UDP + H(+). It functions in the pathway bacterial outer membrane biogenesis; LPS lipid A biosynthesis. In terms of biological role, condensation of UDP-2,3-diacylglucosamine and 2,3-diacylglucosamine-1-phosphate to form lipid A disaccharide, a precursor of lipid A, a phosphorylated glycolipid that anchors the lipopolysaccharide to the outer membrane of the cell. This Burkholderia cenocepacia (strain ATCC BAA-245 / DSM 16553 / LMG 16656 / NCTC 13227 / J2315 / CF5610) (Burkholderia cepacia (strain J2315)) protein is Lipid-A-disaccharide synthase.